A 349-amino-acid polypeptide reads, in one-letter code: S-adenosylmethionine:tRNA ribosyltransferase-isomerase (349 aa).

It belongs to the QueA family. As to quaternary structure, monomer.

The protein localises to the cytoplasm. The catalysed reaction is 7-aminomethyl-7-carbaguanosine(34) in tRNA + S-adenosyl-L-methionine = epoxyqueuosine(34) in tRNA + adenine + L-methionine + 2 H(+). Its pathway is tRNA modification; tRNA-queuosine biosynthesis. In terms of biological role, transfers and isomerizes the ribose moiety from AdoMet to the 7-aminomethyl group of 7-deazaguanine (preQ1-tRNA) to give epoxyqueuosine (oQ-tRNA). This is S-adenosylmethionine:tRNA ribosyltransferase-isomerase from Pseudomonas fluorescens (strain SBW25).